Here is a 383-residue protein sequence, read N- to C-terminus: tRNA (adenine(58)-N(1))-methyltransferase catalytic subunit TRM61 (383 aa).

Residues valine 94, 121 to 124 (SGSF), glutamate 139, arginine 144, 168 to 169 (DV), and aspartate 203 contribute to the S-adenosyl-L-methionine site. A Phosphoserine modification is found at serine 302.

Belongs to the class I-like SAM-binding methyltransferase superfamily. TRM61 family. As to quaternary structure, heterotetramer; composed of two copies of TRM6/GCD10 and two copies of TRM61/GCD14.

It is found in the nucleus. The enzyme catalyses adenosine(58) in tRNA + S-adenosyl-L-methionine = N(1)-methyladenosine(58) in tRNA + S-adenosyl-L-homocysteine + H(+). In terms of biological role, catalytic subunit of tRNA (adenine-N(1)-)-methyltransferase, which catalyzes the formation of N(1)-methyladenine at position 58 (m1A58) in initiator methionyl-tRNA. GCD14 is also required for repression of GCN4 mRNA translation by the upstream open reading frames (uORFs) under conditions of amino acid sufficiency. This is tRNA (adenine(58)-N(1))-methyltransferase catalytic subunit TRM61 (GCD14) from Saccharomyces cerevisiae (strain ATCC 204508 / S288c) (Baker's yeast).